The following is a 96-amino-acid chain: Co-chaperonin GroES (96 aa).

This sequence belongs to the GroES chaperonin family. Heptamer of 7 subunits arranged in a ring. Interacts with the chaperonin GroEL.

The protein localises to the cytoplasm. Its function is as follows. Together with the chaperonin GroEL, plays an essential role in assisting protein folding. The GroEL-GroES system forms a nano-cage that allows encapsulation of the non-native substrate proteins and provides a physical environment optimized to promote and accelerate protein folding. GroES binds to the apical surface of the GroEL ring, thereby capping the opening of the GroEL channel. This chain is Co-chaperonin GroES, found in Legionella micdadei (Tatlockia micdadei).